The chain runs to 1090 residues: Telomerase reverse transcriptase (1090 aa).

The tract at residues 184–301 is disordered; the sequence is GFLLRPPSRK…PLEGGPSWRS (118 aa). Residues 190-204 are compositionally biased toward basic residues; sequence PSRKHKSFQVGKKTR. Composition is skewed to basic and acidic residues over residues 218–232 and 252–262; these read EESR…EVST and HHEERRQHEAV. Residues 281–294 show a composition bias toward pro residues; it reads KPPPETSAAPPPLE. A TFLY; involved in RNA binding motif is present at residues 316-321; the sequence is TLGFLY. Interaction with RNA template regions lie at residues 371–376 and 477–503; these read LPLRYF and WKIK…ELAY. Positions 569–893 constitute a Reverse transcriptase domain; it reads SPAQVASLPK…CLFPWCGLLL (325 aa). Residues D666, D826, and D827 each contribute to the Mg(2+) site.

Belongs to the reverse transcriptase family. Telomerase subfamily. Catalytic subunit of the telomerase holoenzyme complex composed minimally of TERT and the telomerase RNA template component (TERC). As to expression, expressed at highest levels in gonads and brain, and at lower levels in heart, spleen, kidney, gill, muscle and skin. Detected in embryonic stem cell lines before and after differentiation. Isoform F is expressed in gonads, with higher levels in testis relative to ovary, but is not detected in other tissues. Isoform B is expressed predominantly in testis. Isoform C is up-regulated in embryonic stem cell lines after differentiation.

The protein localises to the nucleus. It is found in the chromosome. The protein resides in the telomere. The catalysed reaction is DNA(n) + a 2'-deoxyribonucleoside 5'-triphosphate = DNA(n+1) + diphosphate. In terms of biological role, telomerase is a ribonucleoprotein enzyme essential for the replication of chromosome termini in most eukaryotes. It elongates telomeres. It is a reverse transcriptase that adds simple sequence repeats to chromosome ends by copying a template sequence within the RNA component of the enzyme. The protein is Telomerase reverse transcriptase of Oryzias latipes (Japanese rice fish).